The following is a 188-amino-acid chain: uncharacterized protein (188 aa).

This is an uncharacterized protein from Homo sapiens (Human).